Reading from the N-terminus, the 366-residue chain is Adenosine deaminase (366 aa).

Zn(2+) is bound by residues His-19 and His-21. Positions 21, 23, and 181 each coordinate substrate. His-208 serves as a coordination point for Zn(2+). The Proton donor role is filled by Glu-211. Position 304 (Asp-304) interacts with Zn(2+).

It belongs to the metallo-dependent hydrolases superfamily. Adenosine and AMP deaminases family. Adenosine deaminase subfamily. The cofactor is Zn(2+).

The enzyme catalyses adenosine + H2O + H(+) = inosine + NH4(+). The catalysed reaction is 2'-deoxyadenosine + H2O + H(+) = 2'-deoxyinosine + NH4(+). Catalyzes the hydrolytic deamination of adenosine and 2-deoxyadenosine. In Mycobacterium avium (strain 104), this protein is Adenosine deaminase.